An 876-amino-acid chain; its full sequence is Valine--tRNA ligase (876 aa).

A 'HIGH' region motif is present at residues 43 to 53; that stretch reads PNVTGVLHMGH. Positions 533–537 match the 'KMSKS' region motif; it reads KMSKS. Residue lysine 536 participates in ATP binding. Residues 804 to 876 are a coiled coil; the sequence is GALIDVEEEI…DSLNQLQSTK (73 aa).

It belongs to the class-I aminoacyl-tRNA synthetase family. ValS type 1 subfamily. As to quaternary structure, monomer.

The protein localises to the cytoplasm. The catalysed reaction is tRNA(Val) + L-valine + ATP = L-valyl-tRNA(Val) + AMP + diphosphate. Functionally, catalyzes the attachment of valine to tRNA(Val). As ValRS can inadvertently accommodate and process structurally similar amino acids such as threonine, to avoid such errors, it has a 'posttransfer' editing activity that hydrolyzes mischarged Thr-tRNA(Val) in a tRNA-dependent manner. The chain is Valine--tRNA ligase from Porphyromonas gingivalis (strain ATCC 33277 / DSM 20709 / CIP 103683 / JCM 12257 / NCTC 11834 / 2561).